The chain runs to 332 residues: L-lactate dehydrogenase A chain (332 aa).

Residues 29–57 (GAVGMACAISILMKDLADELALVDVVEDK) and Arg99 contribute to the NAD(+) site. Substrate-binding residues include Arg106, Asn138, and Arg169. Asn138 serves as a coordination point for NAD(+). Catalysis depends on His193, which acts as the Proton acceptor. Thr248 is a substrate binding site.

It belongs to the LDH/MDH superfamily. LDH family. Homotetramer.

It localises to the cytoplasm. The catalysed reaction is (S)-lactate + NAD(+) = pyruvate + NADH + H(+). The protein operates within fermentation; pyruvate fermentation to lactate; (S)-lactate from pyruvate: step 1/1. Its function is as follows. Interconverts simultaneously and stereospecifically pyruvate and lactate with concomitant interconversion of NADH and NAD(+). In Python regius (Ball python), this protein is L-lactate dehydrogenase A chain (LDHA).